Consider the following 518-residue polypeptide: Ribonuclease Y (518 aa).

The chain crosses the membrane as a helical span at residues 2 to 22 (GSIIISALLALVIGAVVGFFV). The KH domain maps to 208–271 (TVSVVNLPND…ETARIALDKL (64 aa)). An HD domain is found at 334-427 (VLKHSVEVAF…VAAADALSAA (94 aa)).

This sequence belongs to the RNase Y family.

It localises to the cell membrane. Its function is as follows. Endoribonuclease that initiates mRNA decay. The sequence is that of Ribonuclease Y from Geobacillus thermodenitrificans (strain NG80-2).